A 284-amino-acid chain; its full sequence is Probable protein phosphatase 2C 41 (284 aa).

Residues 35 to 282 (SYGFYLVRGM…DDISCVVVRF (248 aa)) form the PPM-type phosphatase domain. D72, G73, D234, and D273 together coordinate Mn(2+).

This sequence belongs to the PP2C family. Mg(2+) serves as cofactor. It depends on Mn(2+) as a cofactor.

It catalyses the reaction O-phospho-L-seryl-[protein] + H2O = L-seryl-[protein] + phosphate. The catalysed reaction is O-phospho-L-threonyl-[protein] + H2O = L-threonyl-[protein] + phosphate. In Oryza sativa subsp. japonica (Rice), this protein is Probable protein phosphatase 2C 41.